Here is a 417-residue protein sequence, read N- to C-terminus: 4-hydroxy-3-methylbut-2-en-1-yl diphosphate synthase (flavodoxin) (417 aa).

Positions 307, 310, 353, and 360 each coordinate [4Fe-4S] cluster.

It belongs to the IspG family. [4Fe-4S] cluster is required as a cofactor.

It carries out the reaction (2E)-4-hydroxy-3-methylbut-2-enyl diphosphate + oxidized [flavodoxin] + H2O + 2 H(+) = 2-C-methyl-D-erythritol 2,4-cyclic diphosphate + reduced [flavodoxin]. It functions in the pathway isoprenoid biosynthesis; isopentenyl diphosphate biosynthesis via DXP pathway; isopentenyl diphosphate from 1-deoxy-D-xylulose 5-phosphate: step 5/6. Its function is as follows. Converts 2C-methyl-D-erythritol 2,4-cyclodiphosphate (ME-2,4cPP) into 1-hydroxy-2-methyl-2-(E)-butenyl 4-diphosphate. This chain is 4-hydroxy-3-methylbut-2-en-1-yl diphosphate synthase (flavodoxin), found in Xylella fastidiosa (strain 9a5c).